Here is a 411-residue protein sequence, read N- to C-terminus: Mitotic apparatus protein p62 (411 aa).

Acidic residues-rich tracts occupy residues 134 to 156 (AYEV…EEEE), 183 to 201 (ELDE…EEEI), and 246 to 321 (DDDE…EEDS). Residues 134-378 (AYEVGDEDLE…KSPSKPKKEE (245 aa)) form a disordered region. The span at 351–367 (GMKEKKTYSLEDMKQDL) shows a compositional bias: basic and acidic residues.

Belongs to the nucleoplasmin family. Post-translationally, phosphorylated by CaM-kinase II in vitro.

Its subcellular location is the nucleus. Its function is as follows. Required for mitotic progression. Binds to chromatin. The protein is Mitotic apparatus protein p62 of Lytechinus pictus (Painted sea urchin).